Here is a 110-residue protein sequence, read N- to C-terminus: Small ribosomal subunit protein bS16 (110 aa).

Over residues 82–103 the composition is skewed to basic and acidic residues; the sequence is VKKREARNNPEKAVPRKERKAQ. Residues 82–110 form a disordered region; it reads VKKREARNNPEKAVPRKERKAQAEAAAKG.

Belongs to the bacterial ribosomal protein bS16 family.

This chain is Small ribosomal subunit protein bS16, found in Bradyrhizobium sp. (strain ORS 278).